Reading from the N-terminus, the 472-residue chain is Glutamate synthase [NADPH] small chain (472 aa).

Residues 41–72 (QDAAAQAHRCLHCGNPYCEWKCPVHNYIPNWL) form the 4Fe-4S ferredoxin-type domain. Residues cysteine 50, cysteine 53, cysteine 58, and cysteine 62 each contribute to the [4Fe-4S] cluster site.

It depends on [4Fe-4S] cluster as a cofactor.

The enzyme catalyses 2 L-glutamate + NADP(+) = L-glutamine + 2-oxoglutarate + NADPH + H(+). It participates in amino-acid biosynthesis; L-glutamate biosynthesis via GLT pathway; L-glutamate from 2-oxoglutarate and L-glutamine (NADP(+) route): step 1/1. It functions in the pathway energy metabolism; nitrogen metabolism. Catalyzes the conversion of L-glutamine and 2-oxoglutarate into two molecules of L-glutamate. The polypeptide is Glutamate synthase [NADPH] small chain (Halomonas elongata (strain ATCC 33173 / DSM 2581 / NBRC 15536 / NCIMB 2198 / 1H9)).